The sequence spans 430 residues: Tol-Pal system protein TolB (430 aa).

An N-terminal signal peptide occupies residues 1–21 (MKQAFRVALGFLVLWASVLHA).

Belongs to the TolB family. As to quaternary structure, the Tol-Pal system is composed of five core proteins: the inner membrane proteins TolA, TolQ and TolR, the periplasmic protein TolB and the outer membrane protein Pal. They form a network linking the inner and outer membranes and the peptidoglycan layer.

It is found in the periplasm. Its function is as follows. Part of the Tol-Pal system, which plays a role in outer membrane invagination during cell division and is important for maintaining outer membrane integrity. TolB occupies a key intermediary position in the Tol-Pal system because it communicates directly with both membrane-embedded components, Pal in the outer membrane and TolA in the inner membrane. In Yersinia pestis, this protein is Tol-Pal system protein TolB.